The sequence spans 438 residues: Exodeoxyribonuclease 7 large subunit (438 aa).

The interval 406–438 (ATSTGPTDDIPSSAARLPASPAPDARPASGPES) is disordered.

It belongs to the XseA family. Heterooligomer composed of large and small subunits.

The protein localises to the cytoplasm. It carries out the reaction Exonucleolytic cleavage in either 5'- to 3'- or 3'- to 5'-direction to yield nucleoside 5'-phosphates.. Functionally, bidirectionally degrades single-stranded DNA into large acid-insoluble oligonucleotides, which are then degraded further into small acid-soluble oligonucleotides. This Clavibacter sepedonicus (Clavibacter michiganensis subsp. sepedonicus) protein is Exodeoxyribonuclease 7 large subunit.